Consider the following 154-residue polypeptide: UPF0225 protein SG1365 (154 aa).

It belongs to the UPF0225 family.

The protein is UPF0225 protein SG1365 of Sodalis glossinidius (strain morsitans).